Here is a 264-residue protein sequence, read N- to C-terminus: 1-acyl-sn-glycerol-3-phosphate acyltransferase (264 aa).

A helical transmembrane segment spans residues 16-36 (MFYTYLRGLVVLLLWSINGNA). Residues 57–62 (HRTWWD) carry the HXXXXD motif motif. The helical transmembrane segment at 233 to 253 (LILAIILAILTIIFSFIASFI) threads the bilayer.

It belongs to the 1-acyl-sn-glycerol-3-phosphate acyltransferase family.

The protein resides in the membrane. The enzyme catalyses a fatty acyl-[ACP] + a 1-acyl-sn-glycero-3-phosphate = a 1,2-diacyl-sn-glycero-3-phosphate + holo-[ACP]. It carries out the reaction hexadecanoyl-[ACP] + 1-hexadecanoyl-sn-glycero-3-phosphate = 1,2-dihexadecanoyl-sn-glycero-3-phosphate + holo-[ACP]. It functions in the pathway lipid metabolism; phospholipid metabolism. Functionally, converts lysophosphatidic acid (LPA) into phosphatidic acid (PA) by incorporating an acyl moiety at the 2 position. This enzyme utilizes acyl-ACP as fatty acyl donor, but not acyl-CoA. This chain is 1-acyl-sn-glycerol-3-phosphate acyltransferase (plsC), found in Streptococcus pneumoniae (strain ATCC BAA-255 / R6).